The primary structure comprises 181 residues: Nucleoside diphosphate kinase, mitochondrial (181 aa).

Positions 1-10 are enriched in basic residues; the sequence is MFRGGTHRLR. Positions 1 to 22 are disordered; sequence MFRGGTHRLRGQPGLSLPHGPR. A mitochondrion-targeting transit peptide spans 1–24; the sequence is MFRGGTHRLRGQPGLSLPHGPRCY. K40, F88, R116, T122, R133, and N143 together coordinate ATP. H146 (pros-phosphohistidine intermediate) is an active-site residue.

This sequence belongs to the NDK family. The cofactor is Mg(2+). In terms of tissue distribution, highest levels in the liver and kidney with lower levels in the heart, brain and breast muscle.

The protein localises to the mitochondrion intermembrane space. It is found in the mitochondrion matrix. It catalyses the reaction a 2'-deoxyribonucleoside 5'-diphosphate + ATP = a 2'-deoxyribonucleoside 5'-triphosphate + ADP. It carries out the reaction a ribonucleoside 5'-diphosphate + ATP = a ribonucleoside 5'-triphosphate + ADP. Feedback inhibition by ADP. Major role in the synthesis of nucleoside triphosphates other than ATP. The ATP gamma phosphate is transferred to the NDP beta phosphate via a ping-pong mechanism, using a phosphorylated active-site intermediate. Through the catalyzed exchange of gamma-phosphate between di- and triphosphonucleosides participates in regulation of intracellular nucleotide homeostasis. Binds to anionic phospholipids, predominantly to cardiolipin; the binding inhibits its phosphotransfer activity. Acts as a mitochondria-specific NDK coupled to respiration. Promotes the redistribution of cardiolipin between the mitochondrial inner membrane and outer membrane which is implicated in pro-apoptotic signaling. In Columba livia (Rock dove), this protein is Nucleoside diphosphate kinase, mitochondrial (NME4).